Reading from the N-terminus, the 296-residue chain is GTPase Era (296 aa).

One can recognise an Era-type G domain in the interval 7 to 174 (KCSMSAIVGA…VDYLCETSPY (168 aa)). A G1 region spans residues 15 to 22 (GATNAGKS). Residue 15–22 (GATNAGKS) coordinates GTP. The segment at 41 to 45 (QTTRV) is G2. Positions 62–65 (DTPG) are G3. Residues 62–66 (DTPGI) and 124–127 (NKID) contribute to the GTP site. The tract at residues 124–127 (NKID) is G4. Residues 153–155 (ISA) are G5. The 78-residue stretch at 205–282 (LRHELPYSLS…HLFLFVKVRE (78 aa)) folds into the KH type-2 domain.

It belongs to the TRAFAC class TrmE-Era-EngA-EngB-Septin-like GTPase superfamily. Era GTPase family. Monomer.

It is found in the cytoplasm. The protein resides in the cell inner membrane. Functionally, an essential GTPase that binds both GDP and GTP, with rapid nucleotide exchange. Plays a role in 16S rRNA processing and 30S ribosomal subunit biogenesis and possibly also in cell cycle regulation and energy metabolism. The protein is GTPase Era of Ehrlichia ruminantium (strain Welgevonden).